We begin with the raw amino-acid sequence, 287 residues long: Diaminopimelate epimerase (287 aa).

Substrate is bound by residues N13, Q46, and N66. The active-site Proton donor is the C75. Substrate is bound by residues 76 to 77 (GN), N166, N199, and 217 to 218 (ER). Residue C226 is the Proton acceptor of the active site. 227-228 (GT) contributes to the substrate binding site.

The protein belongs to the diaminopimelate epimerase family. Homodimer.

The protein resides in the cytoplasm. The enzyme catalyses (2S,6S)-2,6-diaminopimelate = meso-2,6-diaminopimelate. It participates in amino-acid biosynthesis; L-lysine biosynthesis via DAP pathway; DL-2,6-diaminopimelate from LL-2,6-diaminopimelate: step 1/1. Catalyzes the stereoinversion of LL-2,6-diaminopimelate (L,L-DAP) to meso-diaminopimelate (meso-DAP), a precursor of L-lysine and an essential component of the bacterial peptidoglycan. The protein is Diaminopimelate epimerase of Paraburkholderia xenovorans (strain LB400).